The sequence spans 109 residues: SRA stem-loop-interacting RNA-binding protein, mitochondrial (109 aa).

Ser15 carries the post-translational modification Phosphoserine. Residues 19-103 form the RRM domain; sequence PVAFVRRIPW…RRPKLPQTSD (85 aa). Phosphothreonine is present on Thr101. Ser102 is modified (phosphoserine).

The protein localises to the mitochondrion. The protein resides in the nucleus. In terms of biological role, RNA-binding protein that acts as a nuclear receptor corepressor. Probably acts by binding the SRA RNA, and repressing the SRA-mediated nuclear receptor coactivation. Binds the STR7 loop of SRA RNA. Also able to repress glucocorticoid (GR), androgen (AR), thyroid (TR) and VDR-mediated transactivation. This Pongo abelii (Sumatran orangutan) protein is SRA stem-loop-interacting RNA-binding protein, mitochondrial (SLIRP).